The sequence spans 254 residues: 4-hydroxy-tetrahydrodipicolinate reductase (254 aa).

7 to 12 (GASGRI) contacts NAD(+). Arginine 35 contributes to the NADP(+) binding site. NAD(+) is bound by residues 91–93 (GTT) and 115–118 (AHNM). Catalysis depends on histidine 147, which acts as the Proton donor/acceptor. A (S)-2,3,4,5-tetrahydrodipicolinate-binding site is contributed by histidine 148. The active-site Proton donor is the lysine 151. Position 157 to 158 (157 to 158 (GT)) interacts with (S)-2,3,4,5-tetrahydrodipicolinate.

Belongs to the DapB family.

The protein resides in the cytoplasm. The catalysed reaction is (S)-2,3,4,5-tetrahydrodipicolinate + NAD(+) + H2O = (2S,4S)-4-hydroxy-2,3,4,5-tetrahydrodipicolinate + NADH + H(+). It carries out the reaction (S)-2,3,4,5-tetrahydrodipicolinate + NADP(+) + H2O = (2S,4S)-4-hydroxy-2,3,4,5-tetrahydrodipicolinate + NADPH + H(+). The protein operates within amino-acid biosynthesis; L-lysine biosynthesis via DAP pathway; (S)-tetrahydrodipicolinate from L-aspartate: step 4/4. Functionally, catalyzes the conversion of 4-hydroxy-tetrahydrodipicolinate (HTPA) to tetrahydrodipicolinate. This chain is 4-hydroxy-tetrahydrodipicolinate reductase, found in Helicobacter pylori (strain Shi470).